Reading from the N-terminus, the 243-residue chain is Adenosine 5'-phosphosulfate reductase (243 aa).

[4Fe-4S] cluster is bound by residues C126, C127, C209, and C212. The active-site Nucleophile; cysteine thiosulfonate intermediate is the C235.

Belongs to the PAPS reductase family. CysH subfamily. Requires [4Fe-4S] cluster as cofactor.

It is found in the cytoplasm. The catalysed reaction is [thioredoxin]-disulfide + sulfite + AMP + 2 H(+) = adenosine 5'-phosphosulfate + [thioredoxin]-dithiol. The protein operates within sulfur metabolism; hydrogen sulfide biosynthesis; sulfite from sulfate. Its function is as follows. Catalyzes the formation of sulfite from adenosine 5'-phosphosulfate (APS) using thioredoxin as an electron donor. The sequence is that of Adenosine 5'-phosphosulfate reductase from Staphylococcus epidermidis (strain ATCC 12228 / FDA PCI 1200).